The chain runs to 189 residues: Orcokinin peptides (189 aa).

The signal sequence occupies residues 1–21 (MRGAGGALAVAVAALLVCCSA). 2 consecutive propeptides follow at residues 22–124 (DPHQ…TFVK) and 145–174 (FYHL…PIGS).

It belongs to the orcokinin family. In terms of tissue distribution, orcokinin-like peptide: Expressed in corpora cardiaca (CC), corpora allata (CA), antennal lobe (AL) and gnathal ganglion (GNG) (at protein level). Expression in CC, CA and GNG detected in some animals, in AL in few animals (at protein level). Orcokinin-like peptide precursor-related peptide: Expressed in corpora cardiaca (CC), corpora allata (CA), antennal lobe (AL) and gnathal ganglion (GNG) (at protein level). Expression in GNG detected in most animals, expression in CC, CA and AL detected in some animals (at protein level).

It is found in the secreted. Myotropic peptides. The chain is Orcokinin peptides from Agrotis ipsilon (Black cutworm moth).